A 424-amino-acid chain; its full sequence is MTAITDIIAREILDSRGNPTVEVDVYLEDGSMGRAAVPSGASTGAHEAVELRDGGKRYLGKGVQKAVDAANTEIFDAIGGIDAENQIQIDNIMIELDGTPNKSRLGANAILGVSLAVAKAAAQASGLPLYRYVGGASACLLPVPMMNIINGGAHADNPIDFQEFMILPVGADTIAEAVRMGSEVFHTLRKELAAQGHNTNVGDEGGFAPGLKSAPEALDFIMKSIEKAGYKPGDDMCLGLDCASTEFFKDGKYVLEGEGRTLESGAMAEYLAELAAKYPIISIEDGMAEDDWDGWKTLTDLTGKKTQLVGDDLFVTNSARLRDGIRMGVANSILVKVNQIGSLTETLDAVNTAHKAAYTAVMSHRSGETEDSTIADLAVATNCGQIKTGSLSRSDRLAKYNQLIRIEEGLGPQAQYAGRSIIRG.

Gln-162 is a (2R)-2-phosphoglycerate binding site. Glu-204 functions as the Proton donor in the catalytic mechanism. Asp-241, Glu-284, and Asp-311 together coordinate Mg(2+). Residues Lys-336, Arg-365, Ser-366, and Lys-387 each coordinate (2R)-2-phosphoglycerate. Catalysis depends on Lys-336, which acts as the Proton acceptor.

This sequence belongs to the enolase family. The cofactor is Mg(2+).

It is found in the cytoplasm. The protein resides in the secreted. Its subcellular location is the cell surface. It carries out the reaction (2R)-2-phosphoglycerate = phosphoenolpyruvate + H2O. It participates in carbohydrate degradation; glycolysis; pyruvate from D-glyceraldehyde 3-phosphate: step 4/5. Functionally, catalyzes the reversible conversion of 2-phosphoglycerate (2-PG) into phosphoenolpyruvate (PEP). It is essential for the degradation of carbohydrates via glycolysis. The protein is Enolase of Rhizobium leguminosarum bv. trifolii (strain WSM2304).